Consider the following 60-residue polypeptide: UPF0181 protein ESA_01442 (60 aa).

This sequence belongs to the UPF0181 family.

This chain is UPF0181 protein ESA_01442, found in Cronobacter sakazakii (strain ATCC BAA-894) (Enterobacter sakazakii).